The following is a 573-amino-acid chain: Probable D-xylulose kinase A (573 aa).

Positions 100, 171, 287, and 288 each coordinate substrate. Residues Trp368, 473–474 (GG), and Asn477 contribute to the ATP site.

This sequence belongs to the FGGY kinase family.

It localises to the cytoplasm. The enzyme catalyses D-xylulose + ATP = D-xylulose 5-phosphate + ADP + H(+). Its function is as follows. Highly specific D-xylulose kinase which participates in the catabolism of xylose. Xylose is a major component of hemicelluloses such as xylan. Most fungi utilize D-xylose via three enzymatic reactions, xylose reductase (XR), xylitol dehydrogenase (XDH), and xylulokinase, to form xylulose 5-phosphate, which enters pentose phosphate pathway. The protein is Probable D-xylulose kinase A (xkiA) of Aspergillus terreus (strain NIH 2624 / FGSC A1156).